The sequence spans 193 residues: CASP-like protein 1D1 (193 aa).

A disordered region spans residues 1–24 (MGYETKSTLDTERSTAPGTGTTTK). At 1–30 (MGYETKSTLDTERSTAPGTGTTTKSCSMTQ) the chain is on the cytoplasmic side. Over residues 14–24 (STAPGTGTTTK) the composition is skewed to polar residues. Residues 31–51 (VVLRFVLFAATLTSIVVMVTS) traverse the membrane as a helical segment. Topologically, residues 52–76 (KQTKNIFLPGTPIRIPAAEFTNSPA) are extracellular. The chain crosses the membrane as a helical span at residues 77 to 97 (LIYFVVALSVACFYSIVSTFV). The Cytoplasmic portion of the chain corresponds to 98-108 (TVSAFKKHSCS). Residues 109–129 (AVLLLNLAIMDAVMVGIVASA) traverse the membrane as a helical segment. Residues 130-162 (TGAGGGVAYLGLKGNKEVRWGKICHIYDKFCRH) lie on the Extracellular side of the membrane. A helical transmembrane segment spans residues 163–183 (VGGAIAVSLFASVVLLLLSII). The Cytoplasmic segment spans residues 184 to 193 (SVLSLYKKIR).

It belongs to the Casparian strip membrane proteins (CASP) family. In terms of assembly, homodimer and heterodimers.

The protein resides in the cell membrane. This chain is CASP-like protein 1D1, found in Arabidopsis thaliana (Mouse-ear cress).